We begin with the raw amino-acid sequence, 888 residues long: Isoleucine--tRNA ligase (888 aa).

The 'HIGH' region motif lies at 61–71 (PYANGSIHIGH). E551 provides a ligand contact to L-isoleucyl-5'-AMP. Residues 592–596 (KMSKQ) carry the 'KMSKS' region motif. K595 is a binding site for ATP. Residues C862, C865, C879, and C882 each coordinate Zn(2+).

The protein belongs to the class-I aminoacyl-tRNA synthetase family. IleS type 1 subfamily. In terms of assembly, monomer. Requires Zn(2+) as cofactor.

It localises to the cytoplasm. It carries out the reaction tRNA(Ile) + L-isoleucine + ATP = L-isoleucyl-tRNA(Ile) + AMP + diphosphate. In terms of biological role, catalyzes the attachment of isoleucine to tRNA(Ile). As IleRS can inadvertently accommodate and process structurally similar amino acids such as valine, to avoid such errors it has two additional distinct tRNA(Ile)-dependent editing activities. One activity is designated as 'pretransfer' editing and involves the hydrolysis of activated Val-AMP. The other activity is designated 'posttransfer' editing and involves deacylation of mischarged Val-tRNA(Ile). In Mycoplasmopsis pulmonis (strain UAB CTIP) (Mycoplasma pulmonis), this protein is Isoleucine--tRNA ligase.